Reading from the N-terminus, the 141-residue chain is ATP synthase epsilon chain (141 aa).

This sequence belongs to the ATPase epsilon chain family. F-type ATPases have 2 components, CF(1) - the catalytic core - and CF(0) - the membrane proton channel. CF(1) has five subunits: alpha(3), beta(3), gamma(1), delta(1), epsilon(1). CF(0) has three main subunits: a, b and c.

It localises to the cell inner membrane. Functionally, produces ATP from ADP in the presence of a proton gradient across the membrane. The sequence is that of ATP synthase epsilon chain from Thioalkalivibrio sulfidiphilus (strain HL-EbGR7).